Reading from the N-terminus, the 499-residue chain is Probable cytosol aminopeptidase (499 aa).

Residues Lys262 and Asp267 each contribute to the Mn(2+) site. Lys274 is a catalytic residue. Asp285, Asp344, and Glu346 together coordinate Mn(2+). Arg348 is a catalytic residue.

This sequence belongs to the peptidase M17 family. Mn(2+) is required as a cofactor.

The protein localises to the cytoplasm. The enzyme catalyses Release of an N-terminal amino acid, Xaa-|-Yaa-, in which Xaa is preferably Leu, but may be other amino acids including Pro although not Arg or Lys, and Yaa may be Pro. Amino acid amides and methyl esters are also readily hydrolyzed, but rates on arylamides are exceedingly low.. It catalyses the reaction Release of an N-terminal amino acid, preferentially leucine, but not glutamic or aspartic acids.. Its function is as follows. Presumably involved in the processing and regular turnover of intracellular proteins. Catalyzes the removal of unsubstituted N-terminal amino acids from various peptides. The protein is Probable cytosol aminopeptidase of Protochlamydia amoebophila (strain UWE25).